Here is a 309-residue protein sequence, read N- to C-terminus: Homoserine kinase (309 aa).

91–101 contacts ATP; it reads PIGSGLGSSAC.

This sequence belongs to the GHMP kinase family. Homoserine kinase subfamily.

The protein localises to the cytoplasm. It catalyses the reaction L-homoserine + ATP = O-phospho-L-homoserine + ADP + H(+). Its pathway is amino-acid biosynthesis; L-threonine biosynthesis; L-threonine from L-aspartate: step 4/5. Functionally, catalyzes the ATP-dependent phosphorylation of L-homoserine to L-homoserine phosphate. The sequence is that of Homoserine kinase from Salmonella agona (strain SL483).